A 200-amino-acid chain; its full sequence is NADH-quinone oxidoreductase subunit C (200 aa).

Belongs to the complex I 30 kDa subunit family. NDH-1 is composed of 14 different subunits. Subunits NuoB, C, D, E, F, and G constitute the peripheral sector of the complex.

The protein localises to the cell inner membrane. The catalysed reaction is a quinone + NADH + 5 H(+)(in) = a quinol + NAD(+) + 4 H(+)(out). Its function is as follows. NDH-1 shuttles electrons from NADH, via FMN and iron-sulfur (Fe-S) centers, to quinones in the respiratory chain. The immediate electron acceptor for the enzyme in this species is believed to be ubiquinone. Couples the redox reaction to proton translocation (for every two electrons transferred, four hydrogen ions are translocated across the cytoplasmic membrane), and thus conserves the redox energy in a proton gradient. The sequence is that of NADH-quinone oxidoreductase subunit C from Ruegeria pomeroyi (strain ATCC 700808 / DSM 15171 / DSS-3) (Silicibacter pomeroyi).